The sequence spans 130 residues: Small ribosomal subunit protein uS9 (130 aa).

This sequence belongs to the universal ribosomal protein uS9 family.

In Neisseria meningitidis serogroup C (strain 053442), this protein is Small ribosomal subunit protein uS9.